A 267-amino-acid polypeptide reads, in one-letter code: Interleukin-1 alpha (267 aa).

Residues 1-112 (MAKVPDLFED…DPEEGIIKPR (112 aa)) constitute a propeptide that is removed on maturation. An N-linked (GlcNAc...) asparagine glycan is attached at Asn-64. Position 82 is an N6-acetyllysine (Lys-82). A nuclear localization signal (NLS) region spans residues 82 to 86 (KKRRL). Ser-87 is modified (phosphoserine). N-linked (GlcNAc...) asparagine glycosylation is found at Asn-100 and Asn-141.

Belongs to the IL-1 family. In terms of assembly, monomer. Interacts with TMED10; the interaction mediates the translocation from the cytoplasm into the ERGIC (endoplasmic reticulum-Golgi intermediate compartment) and thereby secretion. Interacts with IL1R1. Interacts with S100A13; this interaction is the first step in the export of IL1A, followed by direct translocation of this complex across the plasma membrane. Acetylated within its nuclear localization sequence, which impacts subcellular localization. In terms of processing, proteolytic processed by CAPN1 in a calcium-dependent manner. Cleavage from 31 kDa precursor to 18 kDa biologically active molecules. Post-translationally, phosphorylated. Phosphorylation greatly enhances susceptibility to digestion and promotes the conversion of pre-IL1A alpha to the biologically active IL1A.

The protein localises to the nucleus. The protein resides in the cytoplasm. Its subcellular location is the secreted. Its function is as follows. Cytokine constitutively present intracellularly in nearly all resting non-hematopoietic cells that plays an important role in inflammation and bridges the innate and adaptive immune systems. After binding to its receptor IL1R1 together with its accessory protein IL1RAP, forms the high affinity interleukin-1 receptor complex. Signaling involves the recruitment of adapter molecules such as MYD88, IRAK1 or IRAK4. In turn, mediates the activation of NF-kappa-B and the three MAPK pathways p38, p42/p44 and JNK pathways. Within the cell, acts as an alarmin and cell death results in its liberation in the extracellular space after disruption of the cell membrane to induce inflammation and alert the host to injury or damage. In addition to its role as a danger signal, which occurs when the cytokine is passively released by cell necrosis, directly senses DNA damage and acts as signal for genotoxic stress without loss of cell integrity. The chain is Interleukin-1 alpha (IL1A) from Oryctolagus cuniculus (Rabbit).